Reading from the N-terminus, the 408-residue chain is Broad specificity amino-acid racemase (408 aa).

Positions 1–21 (MHKKTLLATLILGLLAGQAVA) are cleaved as a signal peptide. Cysteines 70 and 96 form a disulfide. Lys74 serves as the catalytic Proton acceptor. Position 74 is an N6-(pyridoxal phosphate)lysine (Lys74). Arg173 serves as a coordination point for substrate. Tyr300 functions as the Proton acceptor in the catalytic mechanism. Met348 contacts substrate.

It belongs to the alanine racemase family. Bsr subfamily. In terms of assembly, homodimer. Pyridoxal 5'-phosphate serves as cofactor.

It is found in the periplasm. The catalysed reaction is an L-alpha-amino acid = a D-alpha-amino acid. It carries out the reaction L-lysine = D-lysine. It catalyses the reaction L-arginine = D-arginine. The enzyme catalyses L-alanine = D-alanine. The catalysed reaction is L-serine = D-serine. It carries out the reaction L-methionine = D-methionine. It catalyses the reaction L-leucine = D-leucine. The enzyme catalyses L-cysteine = D-cysteine. The catalysed reaction is L-glutamine = D-glutamine. It carries out the reaction L-asparagine = D-asparagine. It catalyses the reaction L-histidine = D-histidine. Its function is as follows. Amino-acid racemase able to utilize a broad range of substrates. Reversibly racemizes ten of the 19 natural chiral amino acids known, including both non-beta-branched aliphatic amino acids (Ala, Leu, Met, Ser, Cys, Gln and Asn) and positively charged amino acids (His, Lys and Arg). Is not active on negatively charged (Glu and Asp) or aromatic (Tyr, Trp and Phe) amino acids and displays minimal activity towards beta-branched aliphatic (Ile, Val and Thr) substrates. Enables bacteria to produce and release extracellular non-canonical D-amino acids (NCDAAs) that regulate diverse cellular processes. The protein is Broad specificity amino-acid racemase of Aeromonas hydrophila subsp. hydrophila (strain ATCC 7966 / DSM 30187 / BCRC 13018 / CCUG 14551 / JCM 1027 / KCTC 2358 / NCIMB 9240 / NCTC 8049).